Consider the following 57-residue polypeptide: Putative secreted protein MT0250 (57 aa).

An N-terminal signal peptide occupies residues 1-32 (MNRIVAPAAASVVVGLLLGAAAIFGVTLMVQQ). The segment at 34-57 (KKPPLPGGDPSSSVLNRVEYGNRS) is disordered.

The sequence is that of Putative secreted protein MT0250 from Mycobacterium tuberculosis (strain CDC 1551 / Oshkosh).